A 105-amino-acid polypeptide reads, in one-letter code: MSILHDLAATIEARKGADPDSSWTAKLLAKGPEKCAEKFGEEAIEAIIEAVKGDRAKLVSEGADVLYHFLVMLAARDVALDDVLAELAHRQGQSGIAEKAARPKG.

Belongs to the PRA-PH family.

It localises to the cytoplasm. It carries out the reaction 1-(5-phospho-beta-D-ribosyl)-ATP + H2O = 1-(5-phospho-beta-D-ribosyl)-5'-AMP + diphosphate + H(+). It participates in amino-acid biosynthesis; L-histidine biosynthesis; L-histidine from 5-phospho-alpha-D-ribose 1-diphosphate: step 2/9. The chain is Phosphoribosyl-ATP pyrophosphatase from Ruegeria pomeroyi (strain ATCC 700808 / DSM 15171 / DSS-3) (Silicibacter pomeroyi).